We begin with the raw amino-acid sequence, 309 residues long: ADP-L-glycero-D-manno-heptose-6-epimerase (309 aa).

NADP(+) is bound by residues 10–11 (LI), 31–32 (DN), lysine 38, lysine 53, 75–79 (QGACS), and asparagine 92. The active-site Proton acceptor is the tyrosine 139. Lysine 143 lines the NADP(+) pocket. Position 168 (asparagine 168) interacts with substrate. Residues valine 169 and lysine 177 each coordinate NADP(+). The active-site Proton acceptor is the lysine 177. Residues serine 179, histidine 186, 200–203 (FAGS), arginine 208, and tyrosine 271 contribute to the substrate site.

This sequence belongs to the NAD(P)-dependent epimerase/dehydratase family. HldD subfamily. Homopentamer. Requires NADP(+) as cofactor.

It carries out the reaction ADP-D-glycero-beta-D-manno-heptose = ADP-L-glycero-beta-D-manno-heptose. Its pathway is nucleotide-sugar biosynthesis; ADP-L-glycero-beta-D-manno-heptose biosynthesis; ADP-L-glycero-beta-D-manno-heptose from D-glycero-beta-D-manno-heptose 7-phosphate: step 4/4. Catalyzes the interconversion between ADP-D-glycero-beta-D-manno-heptose and ADP-L-glycero-beta-D-manno-heptose via an epimerization at carbon 6 of the heptose. This is ADP-L-glycero-D-manno-heptose-6-epimerase from Histophilus somni (strain 2336) (Haemophilus somnus).